The following is a 123-amino-acid chain: Ribosome-binding factor A (123 aa).

The protein belongs to the RbfA family. Monomer. Binds 30S ribosomal subunits, but not 50S ribosomal subunits or 70S ribosomes.

It localises to the cytoplasm. In terms of biological role, one of several proteins that assist in the late maturation steps of the functional core of the 30S ribosomal subunit. Associates with free 30S ribosomal subunits (but not with 30S subunits that are part of 70S ribosomes or polysomes). Required for efficient processing of 16S rRNA. May interact with the 5'-terminal helix region of 16S rRNA. This chain is Ribosome-binding factor A, found in Koribacter versatilis (strain Ellin345).